We begin with the raw amino-acid sequence, 216 residues long: Uracil phosphoribosyltransferase (216 aa).

5-phospho-alpha-D-ribose 1-diphosphate is bound by residues R81, R106, and 135–143 (DPMLATGSS). Uracil-binding positions include I200 and 205 to 207 (GDA). 5-phospho-alpha-D-ribose 1-diphosphate is bound at residue D206.

The protein belongs to the UPRTase family. Requires Mg(2+) as cofactor.

The catalysed reaction is UMP + diphosphate = 5-phospho-alpha-D-ribose 1-diphosphate + uracil. The protein operates within pyrimidine metabolism; UMP biosynthesis via salvage pathway; UMP from uracil: step 1/1. Its activity is regulated as follows. Allosterically activated by GTP. Functionally, catalyzes the conversion of uracil and 5-phospho-alpha-D-ribose 1-diphosphate (PRPP) to UMP and diphosphate. This is Uracil phosphoribosyltransferase (upp) from Porphyromonas gingivalis (strain ATCC 33277 / DSM 20709 / CIP 103683 / JCM 12257 / NCTC 11834 / 2561).